The following is a 178-amino-acid chain: SsrA-binding protein (178 aa).

The interval 1–28 (MAKKSTPVDSGRSKGKKASAPRGGGPAV) is disordered.

It belongs to the SmpB family.

The protein resides in the cytoplasm. Functionally, required for rescue of stalled ribosomes mediated by trans-translation. Binds to transfer-messenger RNA (tmRNA), required for stable association of tmRNA with ribosomes. tmRNA and SmpB together mimic tRNA shape, replacing the anticodon stem-loop with SmpB. tmRNA is encoded by the ssrA gene; the 2 termini fold to resemble tRNA(Ala) and it encodes a 'tag peptide', a short internal open reading frame. During trans-translation Ala-aminoacylated tmRNA acts like a tRNA, entering the A-site of stalled ribosomes, displacing the stalled mRNA. The ribosome then switches to translate the ORF on the tmRNA; the nascent peptide is terminated with the 'tag peptide' encoded by the tmRNA and targeted for degradation. The ribosome is freed to recommence translation, which seems to be the essential function of trans-translation. The sequence is that of SsrA-binding protein from Corynebacterium urealyticum (strain ATCC 43042 / DSM 7109).